The sequence spans 102 residues: RNA-binding protein Hfq (102 aa).

One can recognise a Sm domain in the interval 9–68; the sequence is DPFLNALRRERVPVSIYLVNGIKLQGQIESFDQFVILLKNTVSQMVYKHAISTVVPSRPV. Residues 63 to 102 are disordered; that stretch reads VPSRPVSHHSNNAGGGTSNNYHHGSNAQGSGAQQDSEETE. The segment covering 70–96 has biased composition (polar residues); that stretch reads HHSNNAGGGTSNNYHHGSNAQGSGAQQ.

Belongs to the Hfq family. In terms of assembly, homohexamer.

RNA chaperone that binds small regulatory RNA (sRNAs) and mRNAs to facilitate mRNA translational regulation in response to envelope stress, environmental stress and changes in metabolite concentrations. Also binds with high specificity to tRNAs. The polypeptide is RNA-binding protein Hfq (Salmonella arizonae (strain ATCC BAA-731 / CDC346-86 / RSK2980)).